Reading from the N-terminus, the 226-residue chain is UPF0173 metal-dependent hydrolase GFO_2312 (226 aa).

The protein belongs to the UPF0173 family.

The chain is UPF0173 metal-dependent hydrolase GFO_2312 from Christiangramia forsetii (strain DSM 17595 / CGMCC 1.15422 / KT0803) (Gramella forsetii).